The chain runs to 530 residues: MKFKKIILALACLSSPLYADQDQQLKSEIQRLQHQAEDLQAQLNRLQKQLANHKSSQQKHEQQAAAKPAEPKSKPTTKSGAAIEEKYHSSKVEVHAPDAHPESISFYPTALIADNRVVTYIAGTPVVSSPFLGDRPAFDGSDYIVNISSINRDVRLMQQRRRLYRAYQKIGYPIPNMPIISLSGKTEPAATFNNPFRSTNTDGDITLGSSELDIAAALNENVEAYIAIAYDESPPAIGPRVNNSAFNLNMGFVNIGNLDKSPLYFTAGQVYVPFGRYSSAMVSAPVTMNLARTKTRPVIFGYKSQADTGPFAAFYGYRSDTTLGRSGVGGVNLGYIFGFDNDINGEIGGGFITSVADAGGMQSTGSNVGTTFGGFGSITNGNENVRKTKAADVHGHVGYDRYNLTLEWVGAVQSFRPQDLSFNGQGARPQAAQAELGMTFMAFNRPASIGVGYQWTKEALALNLPKQRYIGVFNISIWKDTVESIEYRHDIDYGLTQFANGAAPPGLVNLPTLGTGKSADTVSAQIGVFF.

Positions 1–19 are cleaved as a signal peptide; sequence MKFKKIILALACLSSPLYA. Residues 20–66 adopt a coiled-coil conformation; sequence DQDQQLKSEIQRLQHQAEDLQAQLNRLQKQLANHKSSQQKHEQQAAA. Positions 50-81 are disordered; the sequence is LANHKSSQQKHEQQAAAKPAEPKSKPTTKSGA. Residues 63–79 show a composition bias toward low complexity; it reads QAAAKPAEPKSKPTTKS.

The protein belongs to the UPF0422 family.

The polypeptide is UPF0422 protein lpp3030 (Legionella pneumophila (strain Paris)).